The primary structure comprises 1095 residues: DNA-directed RNA polymerase subunit beta'' (1095 aa).

Zn(2+) is bound by residues cysteine 220, cysteine 293, cysteine 300, and cysteine 303.

This sequence belongs to the RNA polymerase beta' chain family. RpoC2 subfamily. In terms of assembly, in plastids the minimal PEP RNA polymerase catalytic core is composed of four subunits: alpha, beta, beta', and beta''. When a (nuclear-encoded) sigma factor is associated with the core the holoenzyme is formed, which can initiate transcription. The cofactor is Zn(2+).

The protein localises to the plastid. Its subcellular location is the chloroplast. It carries out the reaction RNA(n) + a ribonucleoside 5'-triphosphate = RNA(n+1) + diphosphate. Functionally, DNA-dependent RNA polymerase catalyzes the transcription of DNA into RNA using the four ribonucleoside triphosphates as substrates. This Zygnema circumcarinatum (Green alga) protein is DNA-directed RNA polymerase subunit beta''.